We begin with the raw amino-acid sequence, 247 residues long: 2,3-bisphosphoglycerate-dependent phosphoglycerate mutase (247 aa).

Substrate-binding positions include 8–15 (RHGESTWN), 21–22 (TG), Arg60, 87–90 (ERHY), Lys98, 114–115 (RR), and 183–184 (GN). The active-site Tele-phosphohistidine intermediate is His9. Glu87 functions as the Proton donor/acceptor in the catalytic mechanism.

It belongs to the phosphoglycerate mutase family. BPG-dependent PGAM subfamily. In terms of assembly, homodimer.

The enzyme catalyses (2R)-2-phosphoglycerate = (2R)-3-phosphoglycerate. The protein operates within carbohydrate degradation; glycolysis; pyruvate from D-glyceraldehyde 3-phosphate: step 3/5. In terms of biological role, catalyzes the interconversion of 2-phosphoglycerate and 3-phosphoglycerate. This Delftia acidovorans (strain DSM 14801 / SPH-1) protein is 2,3-bisphosphoglycerate-dependent phosphoglycerate mutase.